The sequence spans 519 residues: Trichothecene 15-O-acetyltransferase TRI3 (519 aa).

H414 is a binding site for 15-deacetylcalonectrin.

This sequence belongs to the trichothecene O-acetyltransferase family.

The protein operates within sesquiterpene biosynthesis; trichothecene biosynthesis. 15-O-acetyltransferase; part of the core gene cluster that mediates the biosynthesis of trichothecenes, a very large family of chemically related bicyclic sesquiterpene compounds acting as mycotoxins, including T2-toxin. The biosynthesis of trichothecenes begins with the cyclization of farnesyl diphosphate to trichodiene and is catalyzed by the trichodiene synthase TRI5. Trichodiene undergoes a series of oxygenations catalyzed by the cytochrome P450 monooxygenase TRI4. TRI4 controls the addition of four oxygens at C-2, C-3, C-11, and the C-12, C-13-epoxide to form the intermediate isotrichotriol. Isotrichotriol then undergoes a non-enzymatic isomerization and cyclization to form isotrichodermol. During this process, the oxygen at the C-2 position becomes the pyran ring oxygen and the hydroxyl group at C-11 is lost. More complex type A trichothecenes are built by modifying isotrichodermol through a series of paired hydroxylation and acetylation or acylation steps. Isotrichodermol is converted to isotrichodermin by the acetyltransferase TRI101. TRI101 encodes a C-3 transacetylase that acts as a self-protection or resistance factor during biosynthesis and that the presence of a free C-3 hydroxyl group is a key component of Fusarium trichothecene phytotoxicity. A second hydroxyl group is added to C-15 by the trichothecene C-15 hydroxylase TRI11, producing 15-decalonectrin, which is then acetylated by TRI3, producing calonectrin. A third hydroxyl group is added at C-4 by the cytochrome P450 monooxygenase TRI13, converting calonectrin to 3,15-diacetoxyspirpenol, which is subsequently acetylated by the acetyltransferase TRI7. A fourth hydroxyl group is added to C-8 by the cytochrome P450 monooxygenase TRI1, followed by the addition of an isovaleryl moiety by TRI16. Finally, the acetyl group is removed from the C-3 position by the trichothecene C-3 esterase TRI8 to produce T-2 toxin. The chain is Trichothecene 15-O-acetyltransferase TRI3 from Fusarium sporotrichioides.